The following is a 319-amino-acid chain: D-alanine--D-alanine ligase B (319 aa).

An ATP-grasp domain is found at 117 to 312 (KQVWQSLGPA…FQQLVLAILA (196 aa)). 143–198 (ATELGFPLIVKPAHEGSSIGMAKVNSVDELIAAWKAASTYDSQVLVEQWIQGPEFT) lines the ATP pocket. Mg(2+) contacts are provided by D266, E279, and N281.

The protein belongs to the D-alanine--D-alanine ligase family. Requires Mg(2+) as cofactor. The cofactor is Mn(2+).

The protein localises to the cytoplasm. The catalysed reaction is 2 D-alanine + ATP = D-alanyl-D-alanine + ADP + phosphate + H(+). Its pathway is cell wall biogenesis; peptidoglycan biosynthesis. Functionally, cell wall formation. The chain is D-alanine--D-alanine ligase B from Pseudomonas syringae pv. tomato (strain ATCC BAA-871 / DC3000).